A 215-amino-acid chain; its full sequence is Cytochrome b6 (215 aa).

A helical transmembrane segment spans residues 32 to 52 (IFYCLGGITLTCFLVQVATGF). Cysteine 35 serves as a coordination point for heme c. Heme b-binding residues include histidine 86 and histidine 100. A run of 3 helical transmembrane segments spans residues 90–110 (ASMM…TGGF), 116–136 (LTWV…VTGY), and 186–206 (LHTF…FLMI). The heme b site is built by histidine 187 and histidine 202.

This sequence belongs to the cytochrome b family. PetB subfamily. As to quaternary structure, the 4 large subunits of the cytochrome b6-f complex are cytochrome b6, subunit IV (17 kDa polypeptide, PetD), cytochrome f and the Rieske protein, while the 4 small subunits are PetG, PetL, PetM and PetN. The complex functions as a dimer. Requires heme b as cofactor. It depends on heme c as a cofactor.

Its subcellular location is the plastid. The protein resides in the chloroplast thylakoid membrane. Functionally, component of the cytochrome b6-f complex, which mediates electron transfer between photosystem II (PSII) and photosystem I (PSI), cyclic electron flow around PSI, and state transitions. This chain is Cytochrome b6, found in Pinus thunbergii (Japanese black pine).